We begin with the raw amino-acid sequence, 310 residues long: 4-diphosphocytidyl-2-C-methyl-D-erythritol kinase (310 aa).

Lys12 is a catalytic residue. 97–107 contacts ATP; sequence PIGAGLAGGSS. Residue Asp139 is part of the active site.

The protein belongs to the GHMP kinase family. IspE subfamily.

The enzyme catalyses 4-CDP-2-C-methyl-D-erythritol + ATP = 4-CDP-2-C-methyl-D-erythritol 2-phosphate + ADP + H(+). Its pathway is isoprenoid biosynthesis; isopentenyl diphosphate biosynthesis via DXP pathway; isopentenyl diphosphate from 1-deoxy-D-xylulose 5-phosphate: step 3/6. Its function is as follows. Catalyzes the phosphorylation of the position 2 hydroxy group of 4-diphosphocytidyl-2C-methyl-D-erythritol. The polypeptide is 4-diphosphocytidyl-2-C-methyl-D-erythritol kinase (Synechococcus sp. (strain CC9311)).